Reading from the N-terminus, the 366-residue chain is tRNA N6-adenosine threonylcarbamoyltransferase (366 aa).

Fe cation-binding residues include histidine 119 and histidine 123. Residues 142–146 (LVSGG), aspartate 175, glycine 188, aspartate 192, and asparagine 281 each bind substrate. Position 309 (aspartate 309) interacts with Fe cation.

This sequence belongs to the KAE1 / TsaD family. It depends on Fe(2+) as a cofactor.

Its subcellular location is the cytoplasm. It catalyses the reaction L-threonylcarbamoyladenylate + adenosine(37) in tRNA = N(6)-L-threonylcarbamoyladenosine(37) in tRNA + AMP + H(+). Required for the formation of a threonylcarbamoyl group on adenosine at position 37 (t(6)A37) in tRNAs that read codons beginning with adenine. Is involved in the transfer of the threonylcarbamoyl moiety of threonylcarbamoyl-AMP (TC-AMP) to the N6 group of A37, together with TsaE and TsaB. TsaD likely plays a direct catalytic role in this reaction. The protein is tRNA N6-adenosine threonylcarbamoyltransferase of Synechococcus sp. (strain JA-3-3Ab) (Cyanobacteria bacterium Yellowstone A-Prime).